Here is a 540-residue protein sequence, read N- to C-terminus: H(+)/hexose cotransporter 2 (540 aa).

Topologically, residues 1-29 (MAGGGPVASTTTNRASQYGYARGGLNWYI) are cytoplasmic. A helical membrane pass occupies residues 30 to 50 (FIVALTAGSGGLLFGYDIGVT). At 51–90 (GGVTSMPEFLQKFFPSIYDRTQQPSDSKDPYCTYDDQKLQ) the chain is on the extracellular side. A helical membrane pass occupies residues 91–111 (LFTSSFFLAGMFVSFFAGSVV). At 112–124 (RRWGRKPTMLIAS) the chain is on the cytoplasmic side. A helical transmembrane segment spans residues 125–135 (VLFLAGAGLNA). The Extracellular segment spans residues 136–147 (GAQDLAMLVIGR). The chain crosses the membrane as a helical span at residues 148–168 (VLLGFGVGGGNNAVPLYLSEC). Topologically, residues 169–176 (APPKYRGG) are cytoplasmic. A helical membrane pass occupies residues 177–197 (LNMMFQLAVTIGIIVAQLVNY). Topologically, residues 198–207 (GTQTMNNGWR) are extracellular. The helical transmembrane segment at 208–228 (LSLGLAGVPAIILLIGSLLLP) threads the bilayer. Residues 229–296 (ETPNSLIERG…YSPMLIVTSL (68 aa)) lie on the Cytoplasmic side of the membrane. A helical transmembrane segment spans residues 297 to 317 (IAMLQQLTGINAIMFYVPVLF). Residues 318 to 326 (SSFGTARHA) are Extracellular-facing. A helical membrane pass occupies residues 327–337 (ALLNTVIIGAV). Residues 338 to 355 (NVAATFVSIFSVDKFGRR) lie on the Cytoplasmic side of the membrane. A helical transmembrane segment spans residues 356–376 (GLFLEGGIQMFIGQVVTAAVL). Topologically, residues 377–396 (GVELNKYGTNLPSSTAAGVL) are extracellular. The helical transmembrane segment at 397 to 417 (VVICVYVAAFAWSWGPLGWLV) threads the bilayer. Over 418–435 (PSEIQTLETRGAGMSMAV) the chain is Cytoplasmic. A helical membrane pass occupies residues 436-456 (IVNFLFSFVIGQAFLSMMCAM). Residues 457 to 458 (RW) lie on the Extracellular side of the membrane. The helical transmembrane segment at 459-479 (GVFLFFAGWVVIMTFFVYFCL) threads the bilayer. At 480–540 (PETKGVPVET…SEDGKPASDQ (61 aa)) the chain is on the cytoplasmic side.

It belongs to the major facilitator superfamily. Sugar transporter (TC 2.A.1.1) family.

The protein localises to the membrane. Active uptake of galactose. The chain is H(+)/hexose cotransporter 2 (HUP2) from Parachlorella kessleri (Green alga).